A 55-amino-acid chain; its full sequence is Large ribosomal subunit protein bL33 (55 aa).

It belongs to the bacterial ribosomal protein bL33 family.

The protein is Large ribosomal subunit protein bL33 of Paraburkholderia phytofirmans (strain DSM 17436 / LMG 22146 / PsJN) (Burkholderia phytofirmans).